Reading from the N-terminus, the 161-residue chain is Nucleotide-binding protein Bpro_1596 (161 aa).

It belongs to the YajQ family.

Its function is as follows. Nucleotide-binding protein. The protein is Nucleotide-binding protein Bpro_1596 of Polaromonas sp. (strain JS666 / ATCC BAA-500).